Consider the following 356-residue polypeptide: Histidinol-phosphate aminotransferase (356 aa).

At K214 the chain carries N6-(pyridoxal phosphate)lysine.

Belongs to the class-II pyridoxal-phosphate-dependent aminotransferase family. Histidinol-phosphate aminotransferase subfamily. As to quaternary structure, homodimer. It depends on pyridoxal 5'-phosphate as a cofactor.

The enzyme catalyses L-histidinol phosphate + 2-oxoglutarate = 3-(imidazol-4-yl)-2-oxopropyl phosphate + L-glutamate. Its pathway is amino-acid biosynthesis; L-histidine biosynthesis; L-histidine from 5-phospho-alpha-D-ribose 1-diphosphate: step 7/9. The polypeptide is Histidinol-phosphate aminotransferase (Shigella boydii serotype 18 (strain CDC 3083-94 / BS512)).